The chain runs to 453 residues: Bifunctional protein GlmU (453 aa).

Positions 1–228 (MPHWAAVIMA…VHEALGINSR (228 aa)) are pyrophosphorylase. Residues Lys-23, Gln-73, 78–79 (GT), 100–102 (SGD), Gly-139, Glu-153, Asn-168, and Asn-226 contribute to the UDP-N-acetyl-alpha-D-glucosamine site. Asp-102 serves as a coordination point for Mg(2+). Mg(2+) is bound at residue Asn-226. The tract at residues 229-249 (AQLAAAEDVARQRILSYWMEE) is linker. The segment at 250–453 (GVTIIDPRST…IENWVRNKKK (204 aa)) is N-acetyltransferase. UDP-N-acetyl-alpha-D-glucosamine contacts are provided by Arg-331 and Lys-349. His-361 serves as the catalytic Proton acceptor. Residues Tyr-364 and Asn-375 each coordinate UDP-N-acetyl-alpha-D-glucosamine. Residues Ala-378, 384 to 385 (NY), Ser-403, Ala-421, and Arg-438 contribute to the acetyl-CoA site.

This sequence in the N-terminal section; belongs to the N-acetylglucosamine-1-phosphate uridyltransferase family. The protein in the C-terminal section; belongs to the transferase hexapeptide repeat family. As to quaternary structure, homotrimer. Mg(2+) is required as a cofactor.

Its subcellular location is the cytoplasm. The catalysed reaction is alpha-D-glucosamine 1-phosphate + acetyl-CoA = N-acetyl-alpha-D-glucosamine 1-phosphate + CoA + H(+). It catalyses the reaction N-acetyl-alpha-D-glucosamine 1-phosphate + UTP + H(+) = UDP-N-acetyl-alpha-D-glucosamine + diphosphate. It functions in the pathway nucleotide-sugar biosynthesis; UDP-N-acetyl-alpha-D-glucosamine biosynthesis; N-acetyl-alpha-D-glucosamine 1-phosphate from alpha-D-glucosamine 6-phosphate (route II): step 2/2. It participates in nucleotide-sugar biosynthesis; UDP-N-acetyl-alpha-D-glucosamine biosynthesis; UDP-N-acetyl-alpha-D-glucosamine from N-acetyl-alpha-D-glucosamine 1-phosphate: step 1/1. The protein operates within bacterial outer membrane biogenesis; LPS lipid A biosynthesis. Catalyzes the last two sequential reactions in the de novo biosynthetic pathway for UDP-N-acetylglucosamine (UDP-GlcNAc). The C-terminal domain catalyzes the transfer of acetyl group from acetyl coenzyme A to glucosamine-1-phosphate (GlcN-1-P) to produce N-acetylglucosamine-1-phosphate (GlcNAc-1-P), which is converted into UDP-GlcNAc by the transfer of uridine 5-monophosphate (from uridine 5-triphosphate), a reaction catalyzed by the N-terminal domain. The sequence is that of Bifunctional protein GlmU from Desulfitobacterium hafniense (strain Y51).